We begin with the raw amino-acid sequence, 240 residues long: LexA repressor (240 aa).

The segment at residues 26–46 is a DNA-binding region (H-T-H motif); it reads FDEMKDALDLKSKSGIHRLIT. Catalysis depends on for autocatalytic cleavage activity residues serine 161 and lysine 199.

Belongs to the peptidase S24 family. As to quaternary structure, homodimer.

It carries out the reaction Hydrolysis of Ala-|-Gly bond in repressor LexA.. Represses a number of genes involved in the response to DNA damage (SOS response), including recA and lexA. In the presence of single-stranded DNA, RecA interacts with LexA causing an autocatalytic cleavage which disrupts the DNA-binding part of LexA, leading to derepression of the SOS regulon and eventually DNA repair. This is LexA repressor from Methylobacterium nodulans (strain LMG 21967 / CNCM I-2342 / ORS 2060).